A 508-amino-acid polypeptide reads, in one-letter code: Prenylcysteine oxidase 1 (508 aa).

The first 31 residues, 1–31 (MDPAAPGLACSILRLGLGLLLLCSWWYPGSA), serve as a signal peptide directing secretion. N-linked (GlcNAc...) asparagine glycosylation is found at Asn199, Asn291, and Asn356.

This sequence belongs to the prenylcysteine oxidase family. Requires FAD as cofactor.

The protein resides in the lysosome. It carries out the reaction an S-polyprenyl-L-cysteine + O2 + H2O = a polyprenal + L-cysteine + H2O2. The catalysed reaction is S-(2E,6E)-farnesyl-L-cysteine + O2 + H2O = (2E,6E)-farnesal + L-cysteine + H2O2. The enzyme catalyses [(2E,6E,10E)-geranylgeranyl]-L-cysteine + O2 + H2O = (2E,6E,10E)-geranylgeranial + L-cysteine + H2O2. In terms of biological role, prenylcysteine oxidase that cleaves the thioether bond of prenyl-L-cysteines, such as farnesylcysteine and geranylgeranylcysteine. Only active against free prenylcysteines and not prenylcysteine residues within prenylated proteins or peptides. Involved in the final step in the degradation of prenylated proteins, by degrading prenylcysteines after the protein has been degraded. This chain is Prenylcysteine oxidase 1, found in Bos taurus (Bovine).